We begin with the raw amino-acid sequence, 340 residues long: HTH-type transcriptional regulator CelR (340 aa).

Residues methionine 1–threonine 61 form the HTH lacI-type domain. The segment at residues leucine 9 to asparagine 28 is a DNA-binding region (H-T-H motif).

The protein localises to the cytoplasm. Its activity is regulated as follows. Activity is controlled by cytoplasmic cellobiose levels. Binding of CelR to the celE promoter is inhibited specifically by low concentrations of cellobiose, the major end product of cellulases. Activity may also be regulated through post-translational modification. Its function is as follows. Transcriptional regulator that regulates the expression of all six cellulases, encoded by the cel genes (designated celA through celF). Acts as a repressor. Specifically binds to a 14-bp inverted repeat site, which is present in the upstream region of the cellulase genes. The sequence is that of HTH-type transcriptional regulator CelR from Thermobifida fusca (Thermomonospora fusca).